The following is a 31-amino-acid chain: Kallikrein-1 (31 aa).

One can recognise a Peptidase S1 domain in the interval 1–31 (VIGGQECARDSHPWQAAVYHFSDIECGGVLV).

Belongs to the peptidase S1 family. Kallikrein subfamily.

It carries out the reaction Preferential cleavage of Arg-|-Xaa bonds in small molecule substrates. Highly selective action to release kallidin (lysyl-bradykinin) from kininogen involves hydrolysis of Met-|-Xaa or Leu-|-Xaa.. Its function is as follows. Glandular kallikreins cleave Met-Lys and Arg-Ser bonds in kininogen to release Lys-bradykinin. The protein is Kallikrein-1 of Cavia porcellus (Guinea pig).